The chain runs to 108 residues: UPF0102 protein Tpet_0671 (108 aa).

The protein belongs to the UPF0102 family.

This is UPF0102 protein Tpet_0671 from Thermotoga petrophila (strain ATCC BAA-488 / DSM 13995 / JCM 10881 / RKU-1).